Consider the following 263-residue polypeptide: Regulatory protein RecX (263 aa).

It belongs to the RecX family.

It is found in the cytoplasm. Modulates RecA activity. This Bacillus velezensis (strain DSM 23117 / BGSC 10A6 / LMG 26770 / FZB42) (Bacillus amyloliquefaciens subsp. plantarum) protein is Regulatory protein RecX.